Here is a 526-residue protein sequence, read N- to C-terminus: 4-alpha-glucanotransferase (526 aa).

This sequence belongs to the disproportionating enzyme family.

It is found in the cytoplasm. It catalyses the reaction Transfers a segment of a (1-&gt;4)-alpha-D-glucan to a new position in an acceptor, which may be glucose or a (1-&gt;4)-alpha-D-glucan.. This chain is 4-alpha-glucanotransferase (malQ), found in Chlamydia pneumoniae (Chlamydophila pneumoniae).